We begin with the raw amino-acid sequence, 458 residues long: Methylenetetrahydrofolate--tRNA-(uracil-5-)-methyltransferase TrmFO (458 aa).

12-17 (GAGLAG) is an FAD binding site.

It belongs to the MnmG family. TrmFO subfamily. Requires FAD as cofactor.

The protein localises to the cytoplasm. The enzyme catalyses uridine(54) in tRNA + (6R)-5,10-methylene-5,6,7,8-tetrahydrofolate + NADH + H(+) = 5-methyluridine(54) in tRNA + (6S)-5,6,7,8-tetrahydrofolate + NAD(+). The catalysed reaction is uridine(54) in tRNA + (6R)-5,10-methylene-5,6,7,8-tetrahydrofolate + NADPH + H(+) = 5-methyluridine(54) in tRNA + (6S)-5,6,7,8-tetrahydrofolate + NADP(+). Catalyzes the folate-dependent formation of 5-methyl-uridine at position 54 (M-5-U54) in all tRNAs. The chain is Methylenetetrahydrofolate--tRNA-(uracil-5-)-methyltransferase TrmFO from Deinococcus geothermalis (strain DSM 11300 / CIP 105573 / AG-3a).